The chain runs to 316 residues: Methionyl-tRNA formyltransferase (316 aa).

112-115 (SLLP) contributes to the (6S)-5,6,7,8-tetrahydrofolate binding site.

Belongs to the Fmt family.

It carries out the reaction L-methionyl-tRNA(fMet) + (6R)-10-formyltetrahydrofolate = N-formyl-L-methionyl-tRNA(fMet) + (6S)-5,6,7,8-tetrahydrofolate + H(+). Functionally, attaches a formyl group to the free amino group of methionyl-tRNA(fMet). The formyl group appears to play a dual role in the initiator identity of N-formylmethionyl-tRNA by promoting its recognition by IF2 and preventing the misappropriation of this tRNA by the elongation apparatus. This Psychromonas ingrahamii (strain DSM 17664 / CCUG 51855 / 37) protein is Methionyl-tRNA formyltransferase.